Consider the following 112-residue polypeptide: MTLALMQSMGKLKFLHCLLPLPFRDVPFPLRASKLRDFNAINKFVPLRDVSGSCEVLILYINIECLHTPKEDVSGSGTATAILILRRSSGGPTATKIYLPEDVLPTAEANEF.

The protein localises to the plastid. The protein resides in the chloroplast. This is an uncharacterized protein from Chlamydomonas reinhardtii (Chlamydomonas smithii).